The following is a 465-amino-acid chain: Cysteine--tRNA ligase (465 aa).

Cys-27 is a Zn(2+) binding site. Residues Pro-29–Asn-39 carry the 'HIGH' region motif. Zn(2+) is bound by residues Cys-207, His-232, and Glu-236. A 'KMSKS' region motif is present at residues Lys-264–Ser-268. Lys-267 serves as a coordination point for ATP.

This sequence belongs to the class-I aminoacyl-tRNA synthetase family. As to quaternary structure, monomer. Zn(2+) is required as a cofactor.

It localises to the cytoplasm. It carries out the reaction tRNA(Cys) + L-cysteine + ATP = L-cysteinyl-tRNA(Cys) + AMP + diphosphate. The chain is Cysteine--tRNA ligase from Clostridium botulinum (strain Okra / Type B1).